The primary structure comprises 202 residues: Glycerol-3-phosphate acyltransferase (202 aa).

5 helical membrane passes run 3–23 (NLIIYAFIYLLGSIPFGLILA), 87–107 (LLWSVAVLAILGHCFSIYLLF), 118–138 (GAMIVLLPLEVLTAFIVWVVI), 144–164 (ISSLASLAALLAFVVSSFIFN), and 167–187 (LEIHTHAPVFIIAFIIVYKHL).

Belongs to the PlsY family. As to quaternary structure, probably interacts with PlsX.

Its subcellular location is the cell inner membrane. The catalysed reaction is an acyl phosphate + sn-glycerol 3-phosphate = a 1-acyl-sn-glycero-3-phosphate + phosphate. It participates in lipid metabolism; phospholipid metabolism. Its function is as follows. Catalyzes the transfer of an acyl group from acyl-phosphate (acyl-PO(4)) to glycerol-3-phosphate (G3P) to form lysophosphatidic acid (LPA). This enzyme utilizes acyl-phosphate as fatty acyl donor, but not acyl-CoA or acyl-ACP. This Campylobacter jejuni subsp. jejuni serotype O:2 (strain ATCC 700819 / NCTC 11168) protein is Glycerol-3-phosphate acyltransferase.